Here is a 213-residue protein sequence, read N- to C-terminus: MGSTHSAEKVKSVEDSTSPANPGIFCTPLPGFISNIQRLVLRKLSISARKQKRLNKRSKHLLRPMPRCSSFGSCGTLLTPTKKSASNIADRRYAQWKCSFEHLAQKQPRLHDISEAMTGQTTPRGFPSHTDPKRCLMVMDSSSPESPLYDMVGGQKVRRRLSLRSHALVRRPSARQKAEQAKLDAQFQRDLRDLEDYYGGFHFAQRRERLVKV.

In terms of tissue distribution, blastoderm. Throughout the entire cortex of the embryo although the distribution is not uniform.

Its function is as follows. Actin-myosin network stability during cellularization. Might be involved in increasing actin-actin interactions or membrane-to-cytoskeleton attachments. nullo together with Sry-a and bnk may provide auxiliary functions, by acting both to stabilize a large and dynamic microfilament structure and regulate its functions. This is Protein nullo (nullo) from Drosophila melanogaster (Fruit fly).